The sequence spans 519 residues: MSVSVLSPSRLLGDVSGILQAASLLILLLLLIKAVQLYLHRQWLLKALQQFPCPPSHWLFGHIQELQQDQELQRIQKWVETFPSACPHWLWGGKVRVQLYDPDYMKVILGRSDPKSHGSYRFLAPWIGYGLLLLNGQTWFQHRRMLTPAFHYDILKPYVGLMADSVRVMLDKWEELLGQDSPLEVFQHVSLMTLDTIMKCAFSHQGSIQVDRNSQSYIQAISDLNNLVFSRVRNAFHQNDTIYSLTSAGRWTHRACQLAHQHTDQVIQLRKAQLQKEGELEKIKRKRHLDFLDILLLAKMENGSILSDKDLRAEVDTFMFEGHDTTASGISWILYALATHPKHQERCREEIHSLLGDGASITWNHLDQMPYTTMCIKEALRLYPPVPGIGRELSTPVTFPDGRSLPKGIMVLLSIYGLHHNPKVWPNPEVFDPFRFAPGSAQHSHAFLPFSGGSRNCIGKQFAMNELKVATALTLLRFELLPDPTRIPIPIARLVLKSKNGIHLRLRRLPNPCEDKDQL.

The propeptide occupies 1–4 (MSVS). Residue Glu-321 coordinates heme. Ser-440 bears the Phosphoserine mark. Cys-457 contacts heme.

Belongs to the cytochrome P450 family. The cofactor is heme. In terms of tissue distribution, expressed in liver. Expressed in S2 and S3 segments of proximal tubules in cortex and outer medulla of kidney.

The protein resides in the endoplasmic reticulum membrane. It is found in the microsome membrane. It carries out the reaction an organic molecule + reduced [NADPH--hemoprotein reductase] + O2 = an alcohol + oxidized [NADPH--hemoprotein reductase] + H2O + H(+). It catalyses the reaction an omega-methyl-long-chain fatty acid + reduced [NADPH--hemoprotein reductase] + O2 = an omega-hydroxy-long-chain fatty acid + oxidized [NADPH--hemoprotein reductase] + H2O + H(+). The catalysed reaction is dodecanoate + reduced [NADPH--hemoprotein reductase] + O2 = 12-hydroxydodecanoate + oxidized [NADPH--hemoprotein reductase] + H2O + H(+). The enzyme catalyses tetradecanoate + reduced [NADPH--hemoprotein reductase] + O2 = 14-hydroxytetradecanoate + oxidized [NADPH--hemoprotein reductase] + H2O + H(+). It carries out the reaction hexadecanoate + reduced [NADPH--hemoprotein reductase] + O2 = 16-hydroxyhexadecanoate + oxidized [NADPH--hemoprotein reductase] + H2O + H(+). It catalyses the reaction (9Z)-octadecenoate + reduced [NADPH--hemoprotein reductase] + O2 = 18-hydroxy-(9Z)-octadecenoate + oxidized [NADPH--hemoprotein reductase] + H2O + H(+). The catalysed reaction is (5Z,8Z,11Z,14Z)-eicosatetraenoate + reduced [NADPH--hemoprotein reductase] + O2 = 20-hydroxy-(5Z,8Z,11Z,14Z)-eicosatetraenoate + oxidized [NADPH--hemoprotein reductase] + H2O + H(+). The enzyme catalyses 22-hydroxydocosanoate + reduced [NADPH--hemoprotein reductase] + O2 = 22-oxodocosanoate + oxidized [NADPH--hemoprotein reductase] + 2 H2O + H(+). It carries out the reaction 22-oxodocosanoate + reduced [NADPH--hemoprotein reductase] + O2 = docosanedioate + oxidized [NADPH--hemoprotein reductase] + H2O + 2 H(+). It catalyses the reaction (9R,10S)-epoxy-octadecanoate + reduced [NADPH--hemoprotein reductase] + O2 = 18-hydroxy-(9R,10S)-epoxy-octadecanoate + oxidized [NADPH--hemoprotein reductase] + H2O + H(+). The catalysed reaction is 3-hydroxyhexadecanoate + reduced [NADPH--hemoprotein reductase] + O2 = 3,16-dihydroxyhexadecanoate + oxidized [NADPH--hemoprotein reductase] + H2O + H(+). It participates in lipid metabolism; arachidonate metabolism. It functions in the pathway lipid metabolism; oxylipin biosynthesis. Its activity is regulated as follows. Activated by cytochrome b5. Functionally, a cytochrome P450 monooxygenase involved in the metabolism of fatty acids and their oxygenated derivatives (oxylipins). Mechanistically, uses molecular oxygen inserting one oxygen atom into a substrate, and reducing the second into a water molecule, with two electrons provided by NADPH via cytochrome P450 reductase (CPR; NADPH-ferrihemoprotein reductase). Catalyzes predominantly the oxidation of the terminal carbon (omega-oxidation) of saturated and unsaturated fatty acids, the catalytic efficiency decreasing in the following order: dodecanoic &gt; tetradecanoic &gt; (9Z)-octadecenoic &gt; (9Z,12Z)-octadecadienoic &gt; hexadecanoic acid. Acts as a major omega-hydroxylase for dodecanoic (lauric) acid in liver. Participates in omega-hydroxylation of (5Z,8Z,11Z,14Z)-eicosatetraenoic acid (arachidonate) to 20-hydroxyeicosatetraenoic acid (20-HETE), a signaling molecule acting both as vasoconstrictive and natriuretic with overall effect on arterial blood pressure. Can also catalyze the oxidation of the penultimate carbon (omega-1 oxidation) of fatty acids with lower efficiency. May contribute to the degradation of saturated very long-chain fatty acids (VLCFAs) such as docosanoic acid, by catalyzing successive omega-oxidations to the corresponding dicarboxylic acid, thereby initiating chain shortening. Omega-hydroxylates (9R,10S)-epoxy-octadecanoate stereoisomer. Plays a minor role in omega-oxidation of long-chain 3-hydroxy fatty acids. Has little activity toward prostaglandins A1 and E1. The polypeptide is Cytochrome P450 4A11 (Homo sapiens (Human)).